The following is a 165-amino-acid chain: MGWDLTVKMLAGNEFQVSLSSSMSVSELKAQITQKIGVHAFQQRLAVHPSGVALQDRVPLASQGLGPGSTVLLVVDKCDEPLSILVRNNKGRSSTYEVRLTQTVAHLKQQVSGLEGVQDDLFWLTFEGKPLEDQLPLGEYGLKPLSTVFMNLRLRGGGTEPGGRS.

2 Ubiquitin-like domains span residues 2-78 and 79-157; these read GWDL…VDKC and DEPL…LRGG. S-nitrosocysteine; alternate is present on Cys78. The LRLRGG motif lies at 152–157; that stretch reads LRLRGG. The interval 153–157 is involved in the ligation of specific target proteins; sequence RLRGG. Gly157 is covalently cross-linked (Glycyl lysine isopeptide (Gly-Lys) (interchain with K-? in acceptor proteins)). The propeptide at 158 to 165 is removed in mature form; the sequence is GTEPGGRS.

In terms of assembly, homodimer; disulfide-linked. Interacts with, and is conjugated to its targets by UBE1L (E1 enzyme) and UBE2E2 (E2 enzyme). Interacts with NEDD4. Interacts with PARP12; this interaction inhibits PINK1/Parkin-dependent mitophagy. (Microbial infection) Interacts with vaccinia virus protein E3. As to quaternary structure, (Microbial infection) Interaction with influenza B NS1 protein inhibits its conjugation. In terms of assembly, (Microbial infection) Interacts (via C-terminus) with Crimean-Congo hemorrhagic fever virus (CCHFV) RNA-directed RNA polymerase L (via N-terminus); the deISGylase activity of the viral protein interferes with antiviral signaling pathways mediated by NF-kappaB and IRF signalings. (Microbial infection) Interacts with human cytomegalovirus protein UL26; this interaction inhibits global protein ISGylation. S-nitrosylation decreases its dimerization, thereby increasing the availability as well as the solubility of monomeric ISG15 for its conjugation to cellular proteins. In terms of processing, induced as an inactive, precursor protein that is cleaved by specific proteases to expose the C-terminal diglycine (LRLRGG) motif. This motif is essential not only for its conjugation to substrates but also for its recognition by the relevant processing proteases. Detected in lymphoid cells, striated and smooth muscle, several epithelia and neurons. Expressed in neutrophils, monocytes and lymphocytes. Enhanced expression seen in pancreatic adenocarcinoma, endometrial cancer, and bladder cancer, as compared to non-cancerous tissue. In bladder cancer, the increase in expression exhibits a striking positive correlation with more advanced stages of the disease.

It localises to the cytoplasm. Its subcellular location is the secreted. Its function is as follows. Ubiquitin-like protein which plays a key role in the innate immune response to viral infection either via its conjugation to a target protein (ISGylation) or via its action as a free or unconjugated protein. ISGylation involves a cascade of enzymatic reactions involving E1, E2, and E3 enzymes which catalyze the conjugation of ISG15 to a lysine residue in the target protein. Its target proteins include IFIT1, MX1/MxA, PPM1B, UBE2L6, UBA7, CHMP5, CHMP2A, CHMP4B and CHMP6. Isgylation of the viral sensor IFIH1/MDA5 promotes IFIH1/MDA5 oligomerization and triggers activation of innate immunity against a range of viruses, including coronaviruses, flaviviruses and picornaviruses. Can also isgylate: EIF2AK2/PKR which results in its activation, RIGI which inhibits its function in antiviral signaling response, EIF4E2 which enhances its cap structure-binding activity and translation-inhibition activity, UBE2N and UBE2E1 which negatively regulates their activity, IRF3 which inhibits its ubiquitination and degradation and FLNB which prevents its ability to interact with the upstream activators of the JNK cascade thereby inhibiting IFNA-induced JNK signaling. Exhibits antiviral activity towards both DNA and RNA viruses, including influenza A, HIV-1 and Ebola virus. Restricts HIV-1 and ebola virus via disruption of viral budding. Inhibits the ubiquitination of HIV-1 Gag and host TSG101 and disrupts their interaction, thereby preventing assembly and release of virions from infected cells. Inhibits Ebola virus budding mediated by the VP40 protein by disrupting ubiquitin ligase activity of NEDD4 and its ability to ubiquitinate VP40. ISGylates influenza A virus NS1 protein which causes a loss of function of the protein and the inhibition of virus replication. The secreted form of ISG15 can: induce natural killer cell proliferation, act as a chemotactic factor for neutrophils and act as a IFN-gamma-inducing cytokine playing an essential role in antimycobacterial immunity. The secreted form acts through the integrin ITGAL/ITGB2 receptor to initiate activation of SRC family tyrosine kinases including LYN, HCK and FGR which leads to secretion of IFNG and IL10; the interaction is mediated by ITGAL. The chain is Ubiquitin-like protein ISG15 from Homo sapiens (Human).